A 692-amino-acid polypeptide reads, in one-letter code: Protein adenylyltransferase SelO-1, mitochondrial (692 aa).

The N-terminal 24 residues, 1-24, are a transit peptide targeting the mitochondrion; the sequence is MASVGSRLTRFYISRPGVIARRFL. Residues Gly-142, Gly-144, Lys-176, Asp-188, Gly-189, Arg-246, and Arg-253 each coordinate ATP. Asp-337 serves as the catalytic Proton acceptor. Asn-338 and Asp-347 together coordinate Mg(2+). Asp-347 contacts ATP. The tract at residues 637–676 is disordered; that stretch reads LEQPGWMGRGGAAIPGERDETEEEGSNSSGAGARGLVPYD. Residue Sec-690 is a non-standard amino acid, selenocysteine.

The protein belongs to the SELO family. Requires Mg(2+) as cofactor.

It localises to the mitochondrion. The enzyme catalyses L-tyrosyl-[protein] + ATP = O-(5'-adenylyl)-L-tyrosyl-[protein] + diphosphate. It catalyses the reaction L-threonyl-[protein] + ATP = 3-O-(5'-adenylyl)-L-threonyl-[protein] + diphosphate. The catalysed reaction is L-seryl-[protein] + ATP = 3-O-(5'-adenylyl)-L-seryl-[protein] + diphosphate. Functionally, catalyzes the transfer of adenosine 5'-monophosphate (AMP) to Ser, Thr and Tyr residues of target proteins (AMPylation). May be a redox-active mitochondrial selenoprotein which interacts with a redox target protein. The chain is Protein adenylyltransferase SelO-1, mitochondrial from Danio rerio (Zebrafish).